Here is a 291-residue protein sequence, read N- to C-terminus: MELPSWIRVKAGDYGRIVAVREAVFAAGVHTICEEAHCPNIFSCWGEGTATFLILGDVCTRACKFCAVKTGDPRGFVDPTEPARVAEAVAKLGLRYVVITSVDRDDLPDGGASQFASVVKAVKARAPWAKVEVLTPDFGGSAEAVASVVEAGPDVYAHNLETVRRLTPLVRDRRASYDVSLRVLKMAKELGAVTKSGLMVGLGETFDEVLEALSDLRRVDVDIVTIGQYLKPRGHKRFLEVQRWVPPEEFEKYREAAEAMGFKAVVAGPLVRSSYKAHEAYLEMLRKTIGR.

Residues cysteine 33, cysteine 38, cysteine 44, cysteine 59, cysteine 63, cysteine 66, and serine 274 each contribute to the [4Fe-4S] cluster site. In terms of domain architecture, Radical SAM core spans 45–263 (WGEGTATFLI…REAAEAMGFK (219 aa)).

The protein belongs to the radical SAM superfamily. Lipoyl synthase family. Requires [4Fe-4S] cluster as cofactor.

Its subcellular location is the cytoplasm. The catalysed reaction is [[Fe-S] cluster scaffold protein carrying a second [4Fe-4S](2+) cluster] + N(6)-octanoyl-L-lysyl-[protein] + 2 oxidized [2Fe-2S]-[ferredoxin] + 2 S-adenosyl-L-methionine + 4 H(+) = [[Fe-S] cluster scaffold protein] + N(6)-[(R)-dihydrolipoyl]-L-lysyl-[protein] + 4 Fe(3+) + 2 hydrogen sulfide + 2 5'-deoxyadenosine + 2 L-methionine + 2 reduced [2Fe-2S]-[ferredoxin]. It functions in the pathway protein modification; protein lipoylation via endogenous pathway; protein N(6)-(lipoyl)lysine from octanoyl-[acyl-carrier-protein]: step 2/2. Functionally, catalyzes the radical-mediated insertion of two sulfur atoms into the C-6 and C-8 positions of the octanoyl moiety bound to the lipoyl domains of lipoate-dependent enzymes, thereby converting the octanoylated domains into lipoylated derivatives. The polypeptide is Lipoyl synthase (Pyrobaculum calidifontis (strain DSM 21063 / JCM 11548 / VA1)).